The following is a 1712-amino-acid chain: Probable ATP-dependent RNA helicase DDX60 (1712 aa).

Residues 772 to 939 (LDVVDKNESA…WLQSVKWYWK (168 aa)) form the Helicase ATP-binding domain. Residue 785-792 (APTSSGKT) participates in ATP binding. The short motif at 889 to 892 (DEVH) is the DEVH box element. A Helicase C-terminal domain is found at 1226–1370 (YADQKAVDTE…HFPLSITLVL (145 aa)).

The protein belongs to the helicase family. In terms of assembly, interacts with EXOSC1, EXOSC4, RIGI, IFIH1/MDA5 and DHX58/LGP2. In terms of tissue distribution, brain, lymph node, prostate, stomach, thyroid, tongue, trachea, uterus, skeletal muscle, spleen, kidney, liver and small intestine.

The protein resides in the cytoplasm. The catalysed reaction is ATP + H2O = ADP + phosphate + H(+). In terms of biological role, positively regulates RIGI- and IFIH1/MDA5-dependent type I interferon and interferon inducible gene expression in response to viral infection. Binds ssRNA, dsRNA and dsDNA and can promote the binding of RIGI to dsRNA. Exhibits antiviral activity against hepatitis C virus and vesicular stomatitis virus (VSV). This chain is Probable ATP-dependent RNA helicase DDX60 (DDX60), found in Homo sapiens (Human).